The primary structure comprises 238 residues: Probable transcriptional regulatory protein VV2_1184 (238 aa).

Belongs to the TACO1 family.

It localises to the cytoplasm. The polypeptide is Probable transcriptional regulatory protein VV2_1184 (Vibrio vulnificus (strain CMCP6)).